Here is a 367-residue protein sequence, read N- to C-terminus: MSIFDVLTASAEMMPSHYKDMSTGEMEKRVAAIKRAFGKRLFIPGHHYQKDEVIQFADTAGDSLQLAQVAEKNKEAEYIVFCGVHFMAETADMLTDDNQTVILPDMRAGCSMADMADIQQTDKAWQELQELYGNTIIPLTYVNSTAEIKAFVGRHGGATVTSSNARSVLKWAFKQKERILFLPDQHLGRNTAYDLGIPLTEMAVWDPVQNRLLTDHPENIKVILWKGHCSVHEKFTAENISQLRQRDSGIRIIVHPECSREVVSLSDDSGSTKYIIDTIEQAEPGSKWAIGTEMNLVQRLIHSHPDKQIESLNPDMCPCLTMNRIDLPHLLWSLEQLEKGEPKGVIKVPEAVRTEALRALNRMLSHT.

Residues His46 and Ser63 each contribute to the iminosuccinate site. Cys110 serves as a coordination point for [4Fe-4S] cluster. Residues 141–143 and Ser162 each bind iminosuccinate; that span reads YVN. Cys229 lines the [4Fe-4S] cluster pocket. Residues 255–257 and Thr272 contribute to the iminosuccinate site; that span reads HPE. Position 319 (Cys319) interacts with [4Fe-4S] cluster.

This sequence belongs to the quinolinate synthase family. Type 3 subfamily. It depends on [4Fe-4S] cluster as a cofactor.

It localises to the cytoplasm. It carries out the reaction iminosuccinate + dihydroxyacetone phosphate = quinolinate + phosphate + 2 H2O + H(+). It functions in the pathway cofactor biosynthesis; NAD(+) biosynthesis; quinolinate from iminoaspartate: step 1/1. In terms of biological role, catalyzes the condensation of iminoaspartate with dihydroxyacetone phosphate to form quinolinate. The protein is Quinolinate synthase of Bacillus velezensis (strain DSM 23117 / BGSC 10A6 / LMG 26770 / FZB42) (Bacillus amyloliquefaciens subsp. plantarum).